We begin with the raw amino-acid sequence, 358 residues long: S-adenosylmethionine:tRNA ribosyltransferase-isomerase (358 aa).

Belongs to the QueA family. As to quaternary structure, monomer.

Its subcellular location is the cytoplasm. The enzyme catalyses 7-aminomethyl-7-carbaguanosine(34) in tRNA + S-adenosyl-L-methionine = epoxyqueuosine(34) in tRNA + adenine + L-methionine + 2 H(+). It functions in the pathway tRNA modification; tRNA-queuosine biosynthesis. In terms of biological role, transfers and isomerizes the ribose moiety from AdoMet to the 7-aminomethyl group of 7-deazaguanine (preQ1-tRNA) to give epoxyqueuosine (oQ-tRNA). The chain is S-adenosylmethionine:tRNA ribosyltransferase-isomerase from Chelativorans sp. (strain BNC1).